Here is a 284-residue protein sequence, read N- to C-terminus: uncharacterized protein (284 aa).

Belongs to the methyltransferase superfamily.

The protein localises to the cytoplasm. It is found in the nucleus. Functionally, probable methyltransferase. This is an uncharacterized protein from Schizosaccharomyces pombe (strain 972 / ATCC 24843) (Fission yeast).